The following is a 558-amino-acid chain: uncharacterized protein (558 aa).

A disordered region spans residues 531 to 558 (NEDDGTSASPTAMTFDMPPEHPFYSHYR).

This is an uncharacterized protein from Saccharomyces cerevisiae (strain ATCC 204508 / S288c) (Baker's yeast).